A 376-amino-acid chain; its full sequence is Growth/differentiation factor 8 (376 aa).

The signal sequence occupies residues 1–22 (MHLSQIVLYLSLLIALGPVVLS). A propeptide spanning residues 23–267 (DQEAHQQPSV…ISEGPRRARR (245 aa)) is cleaved from the precursor. Intrachain disulfides connect C273/C283, C282/C341, C310/C373, and C314/C375.

Belongs to the TGF-beta family. As to quaternary structure, homodimer; disulfide-linked. In terms of tissue distribution, highly expressed in muscle. Also expressed in other tissues such as eye, gill, ovary, gut and brain. Very low level detected in testis. Not expressed in liver, kidney, stomach or heart.

It localises to the secreted. Its function is as follows. Acts specifically as a negative regulator of skeletal muscle growth. The sequence is that of Growth/differentiation factor 8 from Oreochromis mossambicus (Mozambique tilapia).